Consider the following 291-residue polypeptide: DegV domain-containing protein CPE0026 (291 aa).

Residues 4-286 enclose the DegV domain; the sequence is FVIFTDSAAD…IGTLAVFFLG (283 aa). 2 residues coordinate hexadecanoate: threonine 63 and serine 95.

Its function is as follows. May bind long-chain fatty acids, such as palmitate, and may play a role in lipid transport or fatty acid metabolism. The polypeptide is DegV domain-containing protein CPE0026 (Clostridium perfringens (strain 13 / Type A)).